We begin with the raw amino-acid sequence, 503 residues long: Probable cytochrome P450 303a1 (503 aa).

Heme is bound at residue Cys-448.

Belongs to the cytochrome P450 family. Requires heme as cofactor.

It localises to the endoplasmic reticulum membrane. The protein resides in the microsome membrane. Its function is as follows. May be involved in the metabolism of insect hormones and in the breakdown of synthetic insecticides. This is Probable cytochrome P450 303a1 (Cyp303a1) from Drosophila melanogaster (Fruit fly).